The following is a 501-amino-acid chain: ATP synthase subunit alpha (501 aa).

169 to 176 (GDRQTGKT) serves as a coordination point for ATP.

It belongs to the ATPase alpha/beta chains family. In terms of assembly, F-type ATPases have 2 components, CF(1) - the catalytic core - and CF(0) - the membrane proton channel. CF(1) has five subunits: alpha(3), beta(3), gamma(1), delta(1), epsilon(1). CF(0) has three main subunits: a(1), b(2) and c(9-12). The alpha and beta chains form an alternating ring which encloses part of the gamma chain. CF(1) is attached to CF(0) by a central stalk formed by the gamma and epsilon chains, while a peripheral stalk is formed by the delta and b chains.

It is found in the cell membrane. It carries out the reaction ATP + H2O + 4 H(+)(in) = ADP + phosphate + 5 H(+)(out). In terms of biological role, produces ATP from ADP in the presence of a proton gradient across the membrane. The alpha chain is a regulatory subunit. The sequence is that of ATP synthase subunit alpha from Streptococcus agalactiae serotype III (strain NEM316).